A 395-amino-acid chain; its full sequence is Imidazolonepropionase (395 aa).

Positions 63 and 65 each coordinate Fe(3+). The Zn(2+) site is built by His-63 and His-65. 4-imidazolone-5-propanoate contacts are provided by Arg-72, Tyr-135, and His-168. An N-formimidoyl-L-glutamate-binding site is contributed by Tyr-135. His-233 contributes to the Fe(3+) binding site. Residue His-233 participates in Zn(2+) binding. Gln-236 contributes to the 4-imidazolone-5-propanoate binding site. Residue Asp-308 coordinates Fe(3+). Zn(2+) is bound at residue Asp-308. N-formimidoyl-L-glutamate-binding residues include Asn-310 and Gly-312. 4-imidazolone-5-propanoate is bound at residue Thr-313.

Belongs to the metallo-dependent hydrolases superfamily. HutI family. Zn(2+) is required as a cofactor. The cofactor is Fe(3+).

Its subcellular location is the cytoplasm. The enzyme catalyses 4-imidazolone-5-propanoate + H2O = N-formimidoyl-L-glutamate. The protein operates within amino-acid degradation; L-histidine degradation into L-glutamate; N-formimidoyl-L-glutamate from L-histidine: step 3/3. Its function is as follows. Catalyzes the hydrolytic cleavage of the carbon-nitrogen bond in imidazolone-5-propanoate to yield N-formimidoyl-L-glutamate. It is the third step in the universal histidine degradation pathway. The chain is Imidazolonepropionase from Cereibacter sphaeroides (strain ATCC 17029 / ATH 2.4.9) (Rhodobacter sphaeroides).